Consider the following 425-residue polypeptide: Protein CLP1 homolog (425 aa).

ATP contacts are provided by residues Glu18, Lys59, and 121-126 (DVGKST).

The protein belongs to the Clp1 family. Clp1 subfamily.

It is found in the nucleus. Functionally, required for endonucleolytic cleavage during polyadenylation-dependent pre-mRNA 3'-end formation. This Drosophila ananassae (Fruit fly) protein is Protein CLP1 homolog (cbc).